Here is a 937-residue protein sequence, read N- to C-terminus: Translation initiation factor IF-2 (937 aa).

2 disordered regions span residues 157–230 (KEAQ…AARK) and 250–346 (IKAP…ESNF). Residues 173 to 205 (EAQKADAAKPVEAKADESAQEEKKRVAAEESKK) show a composition bias toward basic and acidic residues. Positions 252–265 (APEPAAPVAAKPAE) are enriched in low complexity. Basic and acidic residues predominate over residues 267-293 (TLHKPADKKAGEKKDEKKPAVTADKKS). The segment covering 295 to 304 (KSANVSSTWQ) has biased composition (polar residues). The tr-type G domain maps to 437–606 (PRAPVVTVMG…LLQAEVLELK (170 aa)). A G1 region spans residues 446 to 453 (GHVDHGKT). A GTP-binding site is contributed by 446–453 (GHVDHGKT). The tract at residues 471 to 475 (GITQH) is G2. Residues 492 to 495 (DTPG) are G3. GTP is bound by residues 492-496 (DTPGH) and 546-549 (NKID). The segment at 546-549 (NKID) is G4. Residues 582-584 (SAK) form a G5 region.

This sequence belongs to the TRAFAC class translation factor GTPase superfamily. Classic translation factor GTPase family. IF-2 subfamily.

The protein localises to the cytoplasm. One of the essential components for the initiation of protein synthesis. Protects formylmethionyl-tRNA from spontaneous hydrolysis and promotes its binding to the 30S ribosomal subunits. Also involved in the hydrolysis of GTP during the formation of the 70S ribosomal complex. This chain is Translation initiation factor IF-2, found in Janthinobacterium sp. (strain Marseille) (Minibacterium massiliensis).